Here is a 255-residue protein sequence, read N- to C-terminus: 5'-nucleotidase SurE (255 aa).

Residues D8, D9, S40, and N95 each coordinate a divalent metal cation.

It belongs to the SurE nucleotidase family. The cofactor is a divalent metal cation.

It localises to the cytoplasm. It carries out the reaction a ribonucleoside 5'-phosphate + H2O = a ribonucleoside + phosphate. Functionally, nucleotidase that shows phosphatase activity on nucleoside 5'-monophosphates. In Solidesulfovibrio magneticus (strain ATCC 700980 / DSM 13731 / RS-1) (Desulfovibrio magneticus), this protein is 5'-nucleotidase SurE.